Reading from the N-terminus, the 393-residue chain is S-adenosylmethionine synthase 1 (393 aa).

Glu9 contacts Mg(2+). His15 provides a ligand contact to ATP. K(+) is bound at residue Glu43. L-methionine contacts are provided by Glu56 and Gln99. Residues 167-169 (DGK), 235-238 (SGRF), Asp246, 252-253 (RK), Ala269, Lys273, and Lys277 each bind ATP. Asp246 is an L-methionine binding site. Lys277 contributes to the L-methionine binding site.

This sequence belongs to the AdoMet synthase family. In terms of assembly, homotetramer. Mn(2+) is required as a cofactor. It depends on Mg(2+) as a cofactor. Requires Co(2+) as cofactor. K(+) serves as cofactor. Mostly expressed in stems.

The protein localises to the cytoplasm. It catalyses the reaction L-methionine + ATP + H2O = S-adenosyl-L-methionine + phosphate + diphosphate. It functions in the pathway amino-acid biosynthesis; S-adenosyl-L-methionine biosynthesis; S-adenosyl-L-methionine from L-methionine: step 1/1. Catalyzes the formation of S-adenosylmethionine from methionine and ATP. The reaction comprises two steps that are both catalyzed by the same enzyme: formation of S-adenosylmethionine (AdoMet) and triphosphate, and subsequent hydrolysis of the triphosphate. The sequence is that of S-adenosylmethionine synthase 1 (SAM1) from Solanum lycopersicum (Tomato).